The chain runs to 190 residues: Small ribosomal subunit protein uS5 (190 aa).

One can recognise an S5 DRBM domain in the interval 22–85 (FVDKLVHINR…ESAKRNLTRV (64 aa)).

It belongs to the universal ribosomal protein uS5 family. Part of the 30S ribosomal subunit. Contacts proteins S4 and S8.

Its function is as follows. With S4 and S12 plays an important role in translational accuracy. In terms of biological role, located at the back of the 30S subunit body where it stabilizes the conformation of the head with respect to the body. This chain is Small ribosomal subunit protein uS5, found in Rhodopseudomonas palustris (strain BisB18).